Here is a 441-residue protein sequence, read N- to C-terminus: Phosphoribosylamine--glycine ligase (441 aa).

In terms of domain architecture, ATP-grasp spans 112–319 (RNFMKKYGIE…FTEIMSAVVK (208 aa)). 139–196 (IEKLGDVAVKPSGLTGGKGVKVMGDQLPDLKAAKDYTSELLEKGPVVIEERFIGEEFT) provides a ligand contact to ATP. The Mg(2+) site is built by Q277, E289, and N291. Mn(2+) is bound by residues Q277, E289, and N291.

Belongs to the GARS family. Requires Mg(2+) as cofactor. Mn(2+) is required as a cofactor.

It catalyses the reaction 5-phospho-beta-D-ribosylamine + glycine + ATP = N(1)-(5-phospho-beta-D-ribosyl)glycinamide + ADP + phosphate + H(+). It functions in the pathway purine metabolism; IMP biosynthesis via de novo pathway; N(1)-(5-phospho-D-ribosyl)glycinamide from 5-phospho-alpha-D-ribose 1-diphosphate: step 2/2. This Methanosarcina acetivorans (strain ATCC 35395 / DSM 2834 / JCM 12185 / C2A) protein is Phosphoribosylamine--glycine ligase.